The chain runs to 241 residues: UDP-2,3-diacylglucosamine hydrolase (241 aa).

Mn(2+) is bound by residues Asp8, His10, Asp41, Asn79, and His114. Substrate is bound at residue 79 to 80 (NR). Positions 122, 160, 164, 167, and 195 each coordinate substrate. Mn(2+) contacts are provided by His195 and His197.

The protein belongs to the LpxH family. The cofactor is Mn(2+).

It localises to the cell inner membrane. The catalysed reaction is UDP-2-N,3-O-bis[(3R)-3-hydroxytetradecanoyl]-alpha-D-glucosamine + H2O = 2-N,3-O-bis[(3R)-3-hydroxytetradecanoyl]-alpha-D-glucosaminyl 1-phosphate + UMP + 2 H(+). The protein operates within glycolipid biosynthesis; lipid IV(A) biosynthesis; lipid IV(A) from (3R)-3-hydroxytetradecanoyl-[acyl-carrier-protein] and UDP-N-acetyl-alpha-D-glucosamine: step 4/6. Functionally, hydrolyzes the pyrophosphate bond of UDP-2,3-diacylglucosamine to yield 2,3-diacylglucosamine 1-phosphate (lipid X) and UMP by catalyzing the attack of water at the alpha-P atom. Involved in the biosynthesis of lipid A, a phosphorylated glycolipid that anchors the lipopolysaccharide to the outer membrane of the cell. In Aeromonas hydrophila subsp. hydrophila (strain ATCC 7966 / DSM 30187 / BCRC 13018 / CCUG 14551 / JCM 1027 / KCTC 2358 / NCIMB 9240 / NCTC 8049), this protein is UDP-2,3-diacylglucosamine hydrolase.